The sequence spans 511 residues: ATP synthase subunit alpha (511 aa).

169 to 176 (GDRQTGKT) contacts ATP.

Belongs to the ATPase alpha/beta chains family. F-type ATPases have 2 components, CF(1) - the catalytic core - and CF(0) - the membrane proton channel. CF(1) has five subunits: alpha(3), beta(3), gamma(1), delta(1), epsilon(1). CF(0) has three main subunits: a(1), b(2) and c(9-12). The alpha and beta chains form an alternating ring which encloses part of the gamma chain. CF(1) is attached to CF(0) by a central stalk formed by the gamma and epsilon chains, while a peripheral stalk is formed by the delta and b chains.

It localises to the cell inner membrane. It carries out the reaction ATP + H2O + 4 H(+)(in) = ADP + phosphate + 5 H(+)(out). In terms of biological role, produces ATP from ADP in the presence of a proton gradient across the membrane. The alpha chain is a regulatory subunit. This chain is ATP synthase subunit alpha, found in Bartonella tribocorum (strain CIP 105476 / IBS 506).